A 499-amino-acid chain; its full sequence is Transcriptional regulator sdnM (499 aa).

It is found in the nucleus. Its pathway is antibiotic biosynthesis. Transcriptional regulator; part of the gene cluster that mediates the biosynthesis of sordarin and hypoxysordarin, glycoside antibiotics with a unique tetracyclic diterpene aglycone structure. First, the geranylgeranyl diphosphate synthase sdnC constructs GGDP from farnesyl diphosphate and isopentenyl diphosphate. The diterpene cyclase sdnA then catalyzes the cyclization of GGDP to afford cycloaraneosene. Cycloaraneosene is then hydroxylated four times by the putative cytochrome P450 monooxygenases sdnB, sdnE, sdnF and sdnH to give a hydroxylated cycloaraneosene derivative such as cycloaraneosene-8,9,13,19-tetraol. Although the order of the hydroxylations is unclear, at least C8, C9 and C13 of the cycloaraneosene skeleton are hydroxylated before the sordaricin formation. Dehydration of the 13-hydroxy group of the hydroxylated cycloaraneosene derivative might be catalyzed by an unassigned hypothetical protein such as sdnG and sdnP to construct the cyclopentadiene moiety. The FAD-dependent oxidoreductase sdnN is proposed to catalyze the oxidation at C9 of the hydroxylated cycloaraneosene derivative and also catalyze the Baeyer-Villiger oxidation to give the lactone intermediate. The presumed lactone intermediate would be hydrolyzed to give an acrolein moiety and a carboxylate moiety. Then, [4+2]cycloaddition would occur between the acrolein moiety and the cyclopentadiene moiety to give sordaricin. SdnN might also be involved in the [4+2]cycloaddition after the hypothesized oxidation to accommodate the oxidized product and prompt the [4+2]cycloaddition. GDP-6-deoxy-D-altrose may be biosynthesized from GDP-D-mannose by the putative GDP-mannose-4,6-dehydratase sdnI and the short-chain dehydrogenase sdnK. The glycosyltransferase sdnJ catalyzes the attachment of 6-deoxy-D-altrose onto the 19-hydroxy group of sordaricin to give 4'-O-demethylsordarin. The methyltransferase sdnD would complete the biosynthesis of sordarin. Sordarin can be further modified into hypoxysordarin. The unique acyl chain at the 3'-hydroxy group of hypoxysordarin would be constructed by an iterative type I PKS sdnO and the trans-acting polyketide methyltransferase sdnL. SdnL would be responsible for the introduction of an alpha-methyl group of the polyketide chain. Alternatively, the beta-lactamase-like protein sdnR might be responsible for the cleavage and transfer of the polyketide chain from the PKS sdnO to sordarin. Two putative cytochrome P450 monooxygenases, sdnQ and sdnT, might catalyze the epoxidations of the polyketide chain to complete the biosynthesis of hypoxysordarin. Transcriptional regulators sdnM and sdnS are presumably encoded for the transcriptional regulation of the expression of the sdn gene cluster. The protein is Transcriptional regulator sdnM of Sordaria araneosa (Pleurage araneosa).